The sequence spans 300 residues: F-box/LRR-repeat protein 15 (300 aa).

Met1 bears the N-acetylmethionine mark. The F-box domain occupies 19–66; that stretch reads LLDLPWEDVLLPHILSRVPLRQLLRLQRVSRAFRALVQLHLAGLRRFD. The segment at 113 to 269 is interaction with SMURF1; that stretch reads NPQLRSVALA…EPSLSRLRKR (157 aa). 5 LRR repeats span residues 141-162, 167-188, 194-215, 220-241, and 246-267; these read RLQRLSLAHCDWVDGLALRGLA, ALEELDLTACRQLKDEAIVYLA, GLRSLSLAVNANVGDAAVQELA, ELEHLDLTGCLRVGSDGVRTLA, and ALRSLRVRHCHHVAEPSLSRLR.

This sequence belongs to the FBXL15 family. As to quaternary structure, part of the SCF (SKP1-CUL1-F-box) E3 ubiquitin-protein ligase complex SCF(FBXL15) composed of CUL1, SKP1, RBX1 and FBXL15.

The protein localises to the cytoplasm. Its pathway is protein modification; protein ubiquitination. Substrate recognition component of a SCF (SKP1-CUL1-F-box protein) E3 ubiquitin-protein ligase complex which mediates the ubiquitination and subsequent proteasomal degradation of SMURF1, thereby acting as a positive regulator of the BMP signaling pathway. Required for dorsal/ventral pattern formation and bone mass maintenance. Also mediates ubiquitination of SMURF2 and WWP2. The chain is F-box/LRR-repeat protein 15 (FBXL15) from Canis lupus familiaris (Dog).